The sequence spans 68 residues: U-poneritoxin(01)-Om4b (68 aa).

A signal peptide spans 1 to 25; sequence MKPSGLTLAFLVVFMMAIMYNSVQA. Positions 26–39 are excised as a propeptide; sequence EALADADAEAFAEA.

This sequence belongs to the formicidae venom precursor-01 superfamily. In terms of assembly, homo- or heterodimer with PLP4 (AC A0A348G5W0); disulfide-linked. Truncated sequences of this peptide have also been found in the venom. It is possible they have been cleaved in the venom. In terms of tissue distribution, expressed by the venom gland.

The protein resides in the secreted. Its function is as follows. This homodimer composed of two cationic amphipathic alpha-helical peptides has antimicrobial activities against E.coli, S.aureus (MIC=3.1 uM), and S.cerevisiae (MIC=3.1 uM). It also shows histamine-releasing activity (66.4% at 10 uM) and a weak hemolytic activity (10.5% at 50 uM). This is U-poneritoxin(01)-Om4b from Odontomachus monticola (Trap-jaw ant).